The following is a 280-amino-acid chain: uncharacterized protein (280 aa).

This is an uncharacterized protein from Acanthamoeba polyphaga (Amoeba).